The chain runs to 179 residues: Large ribosomal subunit protein uL5 (179 aa).

In terms of assembly, contacts the P site tRNA. Forms a bridge to the 30S subunit in the 70S ribosome. Part of the 50S ribosomal subunit. Part of the 5S rRNA/L5/L18 subcomplex; in this organism only 2 proteins, L5 and L18 have been shown to be part of the 5S rRNA subcomplex, unlike E.coli and T.thermophilus where L25 (TL5) is also found. Has been shown to bind 5S rRNA.

This is one of the proteins that bind and probably mediate the attachment of the 5S RNA into the large ribosomal subunit, where it forms part of the central protuberance. In the 70S ribosome it contacts protein S13 of the 30S subunit (bridge B1b), connecting the 2 subunits; this bridge is implicated in subunit movement. Contacts the P site tRNA; the 5S rRNA and some of its associated proteins might help stabilize positioning of ribosome-bound tRNAs. The protein is Large ribosomal subunit protein uL5 (rplE) of Geobacillus stearothermophilus (Bacillus stearothermophilus).